Here is a 232-residue protein sequence, read N- to C-terminus: Phosphatidylserine decarboxylase proenzyme (232 aa).

The active-site Schiff-base intermediate with substrate; via pyruvic acid is serine 190. Serine 190 is subject to Pyruvic acid (Ser); by autocatalysis.

Belongs to the phosphatidylserine decarboxylase family. PSD-A subfamily. In terms of assembly, heterodimer of a large membrane-associated beta subunit and a small pyruvoyl-containing alpha subunit. The cofactor is pyruvate. Is synthesized initially as an inactive proenzyme. Formation of the active enzyme involves a self-maturation process in which the active site pyruvoyl group is generated from an internal serine residue via an autocatalytic post-translational modification. Two non-identical subunits are generated from the proenzyme in this reaction, and the pyruvate is formed at the N-terminus of the alpha chain, which is derived from the carboxyl end of the proenzyme. The post-translation cleavage follows an unusual pathway, termed non-hydrolytic serinolysis, in which the side chain hydroxyl group of the serine supplies its oxygen atom to form the C-terminus of the beta chain, while the remainder of the serine residue undergoes an oxidative deamination to produce ammonia and the pyruvoyl prosthetic group on the alpha chain.

The protein localises to the cell membrane. The enzyme catalyses a 1,2-diacyl-sn-glycero-3-phospho-L-serine + H(+) = a 1,2-diacyl-sn-glycero-3-phosphoethanolamine + CO2. Its pathway is phospholipid metabolism; phosphatidylethanolamine biosynthesis; phosphatidylethanolamine from CDP-diacylglycerol: step 2/2. Catalyzes the formation of phosphatidylethanolamine (PtdEtn) from phosphatidylserine (PtdSer). The chain is Phosphatidylserine decarboxylase proenzyme from Brucella canis (strain ATCC 23365 / NCTC 10854 / RM-666).